A 501-amino-acid polypeptide reads, in one-letter code: Cytochrome P450 monooxygenase ccsG (501 aa).

An N-terminal signal peptide occupies residues 1–28 (MMITLFTLAVVSIGFFLWWLLTVQPAVT). Residues Asn-115 and Asn-154 are each glycosylated (N-linked (GlcNAc...) asparagine). Residue Cys-443 participates in heme binding.

The protein belongs to the cytochrome P450 family. Heme is required as a cofactor.

The protein operates within mycotoxin biosynthesis. Cytochrome P450 monooxygenase; part of the gene cluster that mediates the biosynthesis of a family of the mycotoxins cytochalasins E and K. The hybrid PKS-NRPS synthetase ccsA and the enoyl reductase ccsC are responsible for fusion of phenylalanine with an octaketide backbone and subsequent release of the stable tetramic acid precursor. The polyketide synthase module (PKS) of the PKS-NRPS ccsA is responsible for the synthesis of the octaketide backbone. The downstream nonribosomal peptide synthetase (NRPS) amidates the carboxyl end of the octaketide with a phenylalanine. A reductase-like domain (R) at the C-terminus catalyzes the reductive release of the polyketide-amino acid intermediate. Because ccsA lacks a designated enoylreductase (ER) domain, the required activity is provided the enoyl reductase ccsC. Upon formation of the 11-membered carbocycle-fused perhydroisoindolone intermediate, a number of oxidative steps are required to afford the final cytochalasin E and K, including two hydroxylations at C17 and C18, one alcohol oxidation at C17, one epoxidation at C6 and C7 and two Baeyer-Villiger oxidations. The oxidative modification at C17, C18 and the C6-C7 epoxidation are likely to be catalyzed by the two cytochrome P450 oxygenases ccsD and ccsG. CcsD may be responsible for the epoxidation of the C6-C7 double bond. CcsG may be responsible for the successive oxidative modifications at C17 and C18. The double Baeyer-Villiger oxidations of ketocytochalasin to precytochalasin and cytochalasin Z(16) are among the final steps leading to cytochalasin E and K and are catalyzed by ccsB. The first oxygen insertion step follows that of the classic BVMO mechanism, generating the ester precytochalasin. Release of precytochalasin into an aqueous environment can generate the shunt product iso-precytochalasin through spontaneous isomerization. Alternatively, precytochalasin can undergo further oxidation by ccsB to yield the in-line carbonate-containing cytochalasin Z(16). Cytochalasin Z(16) is a precursor to cytochalasin E and cytochalasin K, whereas iso-precytochalasin is a precursor to cytochalasin Z(17) and rosellichalasin. The hydrolyase ccsE may catalyze hydrolysis of epoxide bond in cytochalasin E to afford cytochalasin K. The function of ccsF has not been assigned but it may play a role in post-PKS-NRPS biosynthetic step, resistance or transport of cytochalasins and related PKS-NRPS products. The polypeptide is Cytochrome P450 monooxygenase ccsG (Aspergillus clavatus (strain ATCC 1007 / CBS 513.65 / DSM 816 / NCTC 3887 / NRRL 1 / QM 1276 / 107)).